Here is a 163-residue protein sequence, read N- to C-terminus: NAD(P)H-quinone oxidoreductase subunit I, chloroplastic (163 aa).

4Fe-4S ferredoxin-type domains lie at 55 to 84 and 95 to 124; these read GRIH…VDWR and LNYS…MTEE. [4Fe-4S] cluster is bound by residues Cys-64, Cys-67, Cys-70, Cys-74, Cys-104, Cys-107, Cys-110, and Cys-114.

Belongs to the complex I 23 kDa subunit family. In terms of assembly, NDH is composed of at least 16 different subunits, 5 of which are encoded in the nucleus. It depends on [4Fe-4S] cluster as a cofactor.

It localises to the plastid. The protein resides in the chloroplast thylakoid membrane. It catalyses the reaction a plastoquinone + NADH + (n+1) H(+)(in) = a plastoquinol + NAD(+) + n H(+)(out). The catalysed reaction is a plastoquinone + NADPH + (n+1) H(+)(in) = a plastoquinol + NADP(+) + n H(+)(out). Its function is as follows. NDH shuttles electrons from NAD(P)H:plastoquinone, via FMN and iron-sulfur (Fe-S) centers, to quinones in the photosynthetic chain and possibly in a chloroplast respiratory chain. The immediate electron acceptor for the enzyme in this species is believed to be plastoquinone. Couples the redox reaction to proton translocation, and thus conserves the redox energy in a proton gradient. In Phoenix dactylifera (Date palm), this protein is NAD(P)H-quinone oxidoreductase subunit I, chloroplastic (ndhI).